The primary structure comprises 623 residues: Sterol O-acyltransferase 1 (623 aa).

Residues 20-99 are disordered; the sequence is NSAEPSKRHS…EQAEEKYPVD (80 aa). The segment covering 57–72 has biased composition (low complexity); the sequence is ATTTATGVAVAAAAAA. The span at 83-92 shows a compositional bias: acidic residues; it reads DGDDEQDEQA. The next 5 membrane-spanning stretches (helical) occupy residues 195–215, 242–262, 277–297, 384–404, and 422–442; these read LESN…WIAF, LFTI…VVFV, GFVA…PVYV, ISCS…QINY, and IMGT…PVAM. Positions 504–510 match the FYXDWWN motif motif; sequence FYGDWWN. The next 2 membrane-spanning stretches (helical) occupy residues 548 to 568 and 603 to 623; these read ATLF…FAIF and VVFT…YLTL. His560 is a catalytic residue.

This sequence belongs to the membrane-bound acyltransferase family. Sterol o-acyltransferase subfamily.

It is found in the endoplasmic reticulum membrane. Sterol O-acyltransferase that catalyzes the formation of stery esters. The polypeptide is Sterol O-acyltransferase 1 (ARE1) (Saccharomyces uvarum (strain ATCC 76518 / CBS 7001 / CLIB 283 / NBRC 10550 / MCYC 623 / NCYC 2669 / NRRL Y-11845) (Yeast)).